Reading from the N-terminus, the 346-residue chain is Methylthioribose-1-phosphate isomerase (346 aa).

Residues R46 to A48, R89, and Q196 contribute to the substrate site. D237 (proton donor) is an active-site residue. Position 247–248 (N247–K248) interacts with substrate.

This sequence belongs to the eIF-2B alpha/beta/delta subunits family. MtnA subfamily.

It carries out the reaction 5-(methylsulfanyl)-alpha-D-ribose 1-phosphate = 5-(methylsulfanyl)-D-ribulose 1-phosphate. Its pathway is amino-acid biosynthesis; L-methionine biosynthesis via salvage pathway; L-methionine from S-methyl-5-thio-alpha-D-ribose 1-phosphate: step 1/6. Its function is as follows. Catalyzes the interconversion of methylthioribose-1-phosphate (MTR-1-P) into methylthioribulose-1-phosphate (MTRu-1-P). This is Methylthioribose-1-phosphate isomerase from Geobacter sp. (strain M21).